Here is a 411-residue protein sequence, read N- to C-terminus: UPF0597 protein Fnod_1278 (411 aa).

It belongs to the UPF0597 family.

This chain is UPF0597 protein Fnod_1278, found in Fervidobacterium nodosum (strain ATCC 35602 / DSM 5306 / Rt17-B1).